The sequence spans 348 residues: MKILVIGPSWVGDMMMSQSLYRTLKARYPQAIIDVMAPAWCRPLLSRMPEVNEAIPMPLGHGALEIGERRRLGHSLREKRYDRAWVLPNSFKSALIPFFANIPHRTGWRGEMRYGLLNDARVLDKDAWPLMVERYVALAYDKGVMRAAKDLPQPLLWPQLQVSEGEKSLMCSDFSLSSERPLIGFCPGAEFGPAKRWPHYHYAELAKQLINEGYQVVLFGSAKDHEAGNEILAALNSEQQAWCRNLAGETQLEQAVILIAACKAIVTNDSGLMHVAAALDRPLVALYGPSSPDFTPPLSHKARVIRLITGYHKVRKGDTAQGYHQSLIDITPQRVLEELHSLLSEEGV.

This sequence belongs to the glycosyltransferase 9 family.

The enzyme catalyses an L-alpha-D-Hep-(1-&gt;5)-[alpha-Kdo-(2-&gt;4)]-alpha-Kdo-(2-&gt;6)-lipid A + ADP-L-glycero-beta-D-manno-heptose = an L-alpha-D-Hep-(1-&gt;3)-L-alpha-D-Hep-(1-&gt;5)-[alpha-Kdo-(2-&gt;4)]-alpha-Kdo-(2-&gt;6)-lipid A + ADP + H(+). The protein operates within bacterial outer membrane biogenesis; LPS core biosynthesis. Functionally, glycosyltransferase involved in the biosynthesis of the core oligosaccharide region of lipopolysaccharide (LPS). Catalyzes the addition of the second heptose unit to the heptosyl-Kdo2-lipid A module. In Salmonella typhimurium (strain LT2 / SGSC1412 / ATCC 700720), this protein is Lipopolysaccharide heptosyltransferase 2.